The following is a 329-amino-acid chain: Cytosolic arginine sensor for mTORC1 subunit 1 (329 aa).

Residue S14 is modified to Phosphoserine. 2 ACT domains span residues 72–138 and 260–321; these read AEAT…HTLA and GELW…EVLQ. L-arginine contacts are provided by residues 111–112, G274, 280–281, and 300–304; these read SV, IV, and TFNFD.

The protein belongs to the GATS family. As to quaternary structure, forms homodimers and heterodimers with CASTOR2. Interacts with the GATOR2 complex which is composed of MIOS, SEC13, SEH1L, WDR24 and WDR59; the interaction is negatively regulated by arginine. Interacts with TM4SF5; the interaction is positively regulated by leucine and is negatively regulated by arginine. Post-translationally, phosphorylation at Ser-14 by AKT1, promoting the interaction between CASTOR1 and RNF167. In terms of processing, ubiquitinated by RNF167 via 'Lys-29'-polyubiquitination, leading to its degradation, releasing the GATOR2 complex. Ubiquitination by RNF167 is promoted by phosphorylation at Ser-14 by AKT1.

The protein resides in the cytoplasm. Its subcellular location is the cytosol. In terms of biological role, functions as an intracellular arginine sensor within the amino acid-sensing branch of the TORC1 signaling pathway. As a homodimer or a heterodimer with CASTOR2, binds and inhibits the GATOR subcomplex GATOR2 and thereby mTORC1. Binding of arginine to CASTOR1 allosterically disrupts the interaction of CASTOR1-containing dimers with GATOR2 which can in turn activate mTORC1 and the TORC1 signaling pathway. The chain is Cytosolic arginine sensor for mTORC1 subunit 1 from Pongo abelii (Sumatran orangutan).